Consider the following 61-residue polypeptide: Large ribosomal subunit protein uL30 (61 aa).

It belongs to the universal ribosomal protein uL30 family. In terms of assembly, part of the 50S ribosomal subunit.

The sequence is that of Large ribosomal subunit protein uL30 from Chlorobium limicola (strain DSM 245 / NBRC 103803 / 6330).